Here is a 445-residue protein sequence, read N- to C-terminus: Tubulin beta-1 chain (445 aa).

Positions 11, 69, 138, 142, 143, 144, 204, and 226 each coordinate GTP. Glu69 contacts Mg(2+). Positions 426-445 are disordered; it reads QDATAEDEEEYEDEEEEMAA. A compositionally biased stretch (acidic residues) spans 429–445; it reads TAEDEEEYEDEEEEMAA.

Belongs to the tubulin family. As to quaternary structure, dimer of alpha and beta chains. A typical microtubule is a hollow water-filled tube with an outer diameter of 25 nm and an inner diameter of 15 nM. Alpha-beta heterodimers associate head-to-tail to form protofilaments running lengthwise along the microtubule wall with the beta-tubulin subunit facing the microtubule plus end conferring a structural polarity. Microtubules usually have 13 protofilaments but different protofilament numbers can be found in some organisms and specialized cells. Mg(2+) serves as cofactor.

Its subcellular location is the cytoplasm. The protein resides in the cytoskeleton. Tubulin is the major constituent of microtubules, a cylinder consisting of laterally associated linear protofilaments composed of alpha- and beta-tubulin heterodimers. Microtubules grow by the addition of GTP-tubulin dimers to the microtubule end, where a stabilizing cap forms. Below the cap, tubulin dimers are in GDP-bound state, owing to GTPase activity of alpha-tubulin. The chain is Tubulin beta-1 chain (TUBB1) from Eleusine indica (Goosegrass).